Here is a 229-residue protein sequence, read N- to C-terminus: Indole-3-glycerol phosphate synthase (229 aa).

This sequence belongs to the TrpC family.

It catalyses the reaction 1-(2-carboxyphenylamino)-1-deoxy-D-ribulose 5-phosphate + H(+) = (1S,2R)-1-C-(indol-3-yl)glycerol 3-phosphate + CO2 + H2O. The protein operates within amino-acid biosynthesis; L-tryptophan biosynthesis; L-tryptophan from chorismate: step 4/5. This Pyrococcus abyssi (strain GE5 / Orsay) protein is Indole-3-glycerol phosphate synthase.